We begin with the raw amino-acid sequence, 447 residues long: Phosphoglucosamine mutase (447 aa).

Ser-88 serves as the catalytic Phosphoserine intermediate. Residues Ser-88, Asp-231, Asp-233, and Asp-235 each coordinate Mg(2+). Ser-88 is subject to Phosphoserine.

The protein belongs to the phosphohexose mutase family. Mg(2+) serves as cofactor. Activated by phosphorylation.

It carries out the reaction alpha-D-glucosamine 1-phosphate = D-glucosamine 6-phosphate. Functionally, catalyzes the conversion of glucosamine-6-phosphate to glucosamine-1-phosphate. In Methanococcus maripaludis (strain C7 / ATCC BAA-1331), this protein is Phosphoglucosamine mutase.